Here is a 517-residue protein sequence, read N- to C-terminus: Transcription factor MTB3 (517 aa).

The interval 290-331 (GNSSNGYRSDEGEGKLYKEELDERKPRKRGRKPANGREEALN) is disordered. Residues 297-314 (RSDEGEGKLYKEELDERK) show a composition bias toward basic and acidic residues. Positions 327-340 (EEALNHVEAERQRR) are basic motif; degenerate. A bHLH domain is found at 327-376 (EEALNHVEAERQRREKLNQRFYALRAVVPNISKMDKASLLGDAIAYITDL). The interval 341-376 (EKLNQRFYALRAVVPNISKMDKASLLGDAIAYITDL) is helix-loop-helix motif.

The protein resides in the nucleus. In terms of biological role, transcription factor that negatively regulates jasmonate (JA) signaling. Negatively regulates JA-dependent response to wounding, JA-induced expression of defense genes, JA-dependent responses against herbivorous insects, and JA-dependent resistance against Botrytis cinerea infection. Plays a positive role in resistance against the bacterial pathogen Pseudomonas syringae pv tomato DC3000. This Solanum lycopersicum (Tomato) protein is Transcription factor MTB3.